Consider the following 743-residue polypeptide: Putative pre-mRNA-splicing factor ATP-dependent RNA helicase DHX32 (743 aa).

At M1 the chain carries N-acetylmethionine. The segment at M1–D28 is disordered. In terms of domain architecture, Helicase ATP-binding spans M72–K238. ATP is bound at residue G85–S92. A DEAH box motif is present at residues D185 to H188.

The protein belongs to the DEAD box helicase family. DEAH subfamily. In terms of tissue distribution, expressed in lymphoid tissues (at protein level). Expressed in brain, heart, skeletal muscle, colon, thymus, spleen, kidney, liver, small intestine, placenta, lung, lymphoid tissues and blood leukocytes.

Its subcellular location is the nucleus. The protein localises to the mitochondrion. The catalysed reaction is ATP + H2O = ADP + phosphate + H(+). In Homo sapiens (Human), this protein is Putative pre-mRNA-splicing factor ATP-dependent RNA helicase DHX32 (DHX32).